A 662-amino-acid polypeptide reads, in one-letter code: Polyadenylate-binding protein 4 (662 aa).

The interval 1 to 23 is disordered; that stretch reads MAQVQAPSSHSPPPPAVVNDGAA. 4 consecutive RRM domains span residues 46–124, 134–211, 225–302, and 328–405; these read CSLY…YSSR, GNLF…PFLR, TNVY…KAQK, and LNLY…LAQR. Low complexity-rich tracts occupy residues 480–489 and 506–518; these read PMMQPGQQGP and QQPMPYMQPQMMP. Disordered regions lie at residues 480-518 and 634-662; these read PMMQPGQQGPRPGGRRSGDGPMRHQHQQPMPYMQPQMMP and NQPSSQGSEGNKSGSPSDLLASLSINDHL. The 78-residue stretch at 558–635 folds into the PABC domain; it reads SAGQLATSLA…ALDVLRNVNQ (78 aa). Polar residues predominate over residues 634 to 649; the sequence is NQPSSQGSEGNKSGSP.

Belongs to the polyadenylate-binding protein type-1 family. As to quaternary structure, interacts with ERD15/CID1. Interacts with Turnip mosaic virus (TuMV) VPg-Pro.

Its subcellular location is the cytoplasm. The protein localises to the nucleus. Binds the poly(A) tail of mRNA. Appears to be an important mediator of the multiple roles of the poly(A) tail in mRNA biogenesis, stability and translation. During infection with potyvirus TuMV, acts as a potential integral component of the viral replicase complex that could play an important role in the regulation of potyviral RNA-dependent RNA polymerase (RdRp). The protein is Polyadenylate-binding protein 4 (PAB4) of Arabidopsis thaliana (Mouse-ear cress).